The primary structure comprises 151 residues: MKTCQSSHLDSGVESDIQCRSGSGCVVKCSTERMESAAKRRLAANARERRRMQGLNTAFDRLRKVVPQWGQDKKLSKYETLQMALSYIMALTRILAEAERYSTEREWINLHCEHFHPESYHHYTGQKVATDSDPYAQRIFSYHPEHFQIAN.

A bHLH domain is found at 39-91 (KRRLAANARERRRMQGLNTAFDRLRKVVPQWGQDKKLSKYETLQMALSYIMAL).

It is found in the nucleus. The protein localises to the perikaryon. Its subcellular location is the cell projection. The protein resides in the axon. In terms of biological role, transcription factor that binds to DNA at the consensus sequence 5'-CAG[GC]TG-3'. Positively regulates the determination of retinal ganglion cell fate and formation of the optic nerve and retino-hypothalamic tract. Required for retinal circadian rhythm photoentrainment. Plays a role in brainstem auditory signaling and binaural processing. During retinal neurogenesis, activates its own transcription, as well as the transcription of CHRNB3 and BRN3. This is Transcription factor ATOH7 from Gallus gallus (Chicken).